The sequence spans 305 residues: Dihydroorotate dehydrogenase B (NAD(+)), catalytic subunit (305 aa).

FMN contacts are provided by residues Ser-23 and 47–48 (KG). Residues Lys-47 and 71–75 (NAIGL) each bind substrate. FMN contacts are provided by Asn-101 and Asn-129. Substrate is bound at residue Asn-129. The active-site Nucleophile is Cys-132. FMN contacts are provided by Lys-167 and Ile-193. Residue 194–195 (NT) participates in substrate binding. Residues Gly-219, 245-246 (GG), and 267-268 (GT) each bind FMN.

The protein belongs to the dihydroorotate dehydrogenase family. Type 1 subfamily. As to quaternary structure, heterotetramer of 2 PyrK and 2 PyrD type B subunits. It depends on FMN as a cofactor.

It is found in the cytoplasm. The enzyme catalyses (S)-dihydroorotate + NAD(+) = orotate + NADH + H(+). Its pathway is pyrimidine metabolism; UMP biosynthesis via de novo pathway; orotate from (S)-dihydroorotate (NAD(+) route): step 1/1. Catalyzes the conversion of dihydroorotate to orotate with NAD(+) as electron acceptor. This is Dihydroorotate dehydrogenase B (NAD(+)), catalytic subunit (pyrD) from Citrifermentans bemidjiense (strain ATCC BAA-1014 / DSM 16622 / JCM 12645 / Bem) (Geobacter bemidjiensis).